We begin with the raw amino-acid sequence, 4128 residues long: MAEEGTGVRCWLLQLQEFLSAADRCSAAGASYQLIRSLGQECVLSTSSAVQALQISLVFSRDFGLLVFIRKSLSIEDFRDCREEALKFLCVFLEKIDQKVMHYSLDIKNTCTSVYTKDRTAKCKIPALDLLIKLLQILRSTRLMDEFKIGELFNKFYGELASKSKLPDTVLEKVYELLGVLGEVHPSEMINHSENLFRAFLGELKTQMTSTVREPKFPVLAGCLKGLSSLLCNFTKSMEEDPQTSKEIFGFTFKAIRPQIEMKRYAVPLAGLRLLTLHASQFTACLLDNYITLFEVLSKWCSHTNVELKKAAHSALESFLRQISFTVAEDAELHKSRLKYFMEQFYGIIRNTDSNNKELAIAIRGYGLFAGPCKVINAKDVDFMYVELIQRCKQMFLTHADASEDHVYQMPSFLQSIASVLLYLDTVPEVYTPVLEHLMVVQIDSFPQYSPKMQLVCCKAIIKLFLALSEKGPVHWNCISAVVHQGLIRICSKPVVLQKDVESRSDNRSASEEVRTGRWKVPTYKDYVDLFQHLLGCDQMEDFILGDETFLFVNSSLKSLNHLLYDEFIRSVLKIVEKLDLTLEKQTVGEQEDGSTADVWVIPTSDPAANLHPAKPSDFSALINLVEFCREILPRKHVGFFEPWVYSFAYELILQSTRLPLISGFYKLLSIAVKNARKIKYFEGISPKSLKHSPEDTEKYSCFALFAKFGKEVSVKMKQYKDELLASCLTFVLSLPHDIIELDVRAYVPALQMAFKLGLSHMPLAEIGLHALKEWSVHIDKSILQPYYKDILPCLDGYLNTSTLSDETKSHWGLSALSRAAQKGFNRHVVKHLKRTRNSSPDEALSLEEIRIKVVQILGSLGGQINKSLVTATSGERMKKYVAWDAERRLSFAVPFREMKPVIYLDVFLPRVTELALSASDRQTKVAACELLHSMVMFMLGRATQMPEGQGLPPMYQLYKHTFPVLLQLACDVDQVTRQLYEPLVMQLIHWLTNNKKFESQDTVALLEAILDGIVDPVDSTLRDFCGRCVQEFLKWSIKQTTPQQQEKSPVNSKSLFKRLYSLALHPNAFKRLGAALAFNHIYKEFREEGSLVEQFVFEALVTYMESLALAHEDEKSLGTVQQCCDAIDHLRRIIEKKHVSLNKAKKRRLPQGFPPLTSLCLLDLVEWLLAHCGRPQTECRHKSMELFYKFVPLLPGNKSPSLWLKDLIKKKGISFLINTFEGGASSSDQPAGILAQPTLVYLQGPISLRGVLQWLDLLLAALECYNTFIEKETVQGQEVLGAEVQSSLLKSVAFFLESIATHSARAVEQRFGSGAPGPPSLHEEEKYNYSKCTVLVRIMEFTTTLLIASPEDCKLLEKDLCNTNLMQVLVKMICEPMSLGFNIGDVQVMNHLPSICVNLLKALRKSPYRDMLETHLKEKVTVQSVEELCSINLCSSGARQERSKLLSILSACKQLHKAGFSHVISPSQSTALNHSVGMRLLSLVYKGIVPAEERQCLQSLDPSCKSLANGLLELAFGFGGLCDHLVSLLLNSAMLSTQYLGSSQRNISFSHGEYFYSLFSEVINSELLKNLDIAVSRLMESSSDNPKMVSTVLNGMLDTSFRDRAVQKHQGLKLATAILQNWRKCDSWWAPDSAPESKTTVLSLLAKMLQIDSALSFDTNHSSFSEIFTTYASLLADTKLGLHLKGQAIILLPFFTSLREGSLENLKHILEKLIVCNFPMKSDEFPPDSLKYNNYVDCMKKFLDALELSQSPMLFQLMTDILCREQRHIMEELFQTTFKRIARQSPCVTQLNLLESVYTMFRKADLPSNVTRQAFVDRSLLTLLWHCDLDTLKEFFSRIVVDAIDVLKSRFTKLNEFTFDTQITKKMCYYKMLAVMYSRLLKDDVHSKEAKINQAFHGSRVAEGNELTKTLLKLCHDAFTENMVGESQLLEKRRLYHCAAYNCAISLISCVFNELKFYQGFLFNEKPEKNLFIFENLIDLKRCYTFPIEVEVPMERKKKYIEIRKEARDAANGASGSPHYMSSLSYLTDSSLSEEMSQFDFSTGVQSYSYSSQDRKPTTGHFQRREHQDSMTQDDIMELEMDELNQHECMAPMIALIKHMQRNVIAPKGEEGSIPKDLPPWMKFLHDKLGNASVSLNIRLFLAKLVINTEEVFRPYAKHWLSPLLQLAVCENNREGIHYMMVEIVATILSWTGLATPTGVPKDEVLANRLLRFLMKHVFHPKRAVFRHNLEIIKTLVECWKECLSIPYRLIFEKFSHKDPNSKDNSVGIQLLGIVIANNLPPYDPNCDITSAMYFEALVNNMSFVKYKEVYAAAAEVLGLILQYITERKHVIAELVCELVIKQLKQHQNTMEDKFIVCLNKIAKGFPPLADRFLNALFFLLPKFHGVMKTLCLEVVLCRAEEITGLYLQLKSKDFLQVMRHRDDERQKVCLDIVYKMVAKLKPIELRELLNPVVEFVSHPSPTCREQMYNILMWIHDNYRDQESQNDEDSQEIFKLAKDVLIQGLIDENVGLQLIIRNFWSHETRLPSNTLDRLLALNSLYSPKIEVHFLSLATNFLLEMTRMSPDYLNPIFEHPLSECEFQEYTIDPDWRFRSTVLTPMFIETQASPSILHTQTQEGPLSDQRQKPGQVRATQQQYDFTPTQASVERSSFDWLTGSSIDLLADHTVFSSETLSSSLLFSHKRTEKSQRMSCKSVGPDFGTKKLGLPDDEVDNQVKSGTPSQADILRLRRRFLKDREKLSLLYAKRGLMEQKLEKDIKSEFKMKQDAQVVLYRSYRHGDLPDIQIQHSGLITPLQAVAQKDPIIAKQLFSSLFSGILKEMNKFKTTSEKNIITQNLLQDFNRFLNTTFLFFPPFVSCIQEISCQHPDFLTLDPASVRVGCLASLQQPGGIRLLEEALLRLMPKEPPTKRVRGKTCLPPDVLRWMELAKLYRSIGEYDVLRGIFSSELGTTQDTQNALLAEARSDYCQAAKLYDEALNKLEWVDGEPTEAEKEFWELASLDCYNNLSKWKELEYCSTVNIVSENSLDLSKMWSEPFYQETYLPYVIRSKLKLLLQGEGNQSLLTFVDEAMNKELQKTVLELQYSQELSLLYILQDDIDRATYYIKNGIQIFMQNYSSIDVLLYRSRLAKLQSVQTLAEIEEFLSFICKHGDLSSLGPLRRLLKTWTSRYPDVVTDPMHIWDDIITNRCFFLSKIEERLTAPSGDHSMSVDEDEESIDREVYEPKEDVRCMLQSCRFTMKMKMIESAWKQSNFSLSMKLLKEMHKESKTREIWRVQWLHSYSQLNHCRSHTQSPREQVLNMLKTITLLDESDISNYLNKNIQASCDQSILLGTTCRIMADALSREPACLSDLEENKVNSILTLSGSNAENTETVITGLYQRAFHHLSKAVQSAEEETQLSCWGHEAAAERAHAYMTLVGFCDQQLRKVEESASQKTSAEMEAYPALVVEKMLRALKLNSSEARLKFPRLLQIIEQYSEETLNIMTKEISSIPCWQFIGWISHMMALLDKEEAIAVQHTVEEIADNYPQAIIYPFIISSESYSFKNTSSGHNNKAFVERIKSKLDHGEVIHSFINALDQLSNPDLLFKDWVSDTKDELGKNPVNKKNIEKLYERMYAALGDLRAPGLGPFRRRFIQAFGKEFVKSFGNGGSKLLTMKVDDFCKITGSLLVRMKKDSKLPGNLKEYSPWMSEFKAQFLKNELEIPGQYDGKSKPLPEYHVRISGFDERVKVMLSLRKPKRIVIRGHDEKEYPFLVKGGEDLRQDQRIEQIFEVMNAILSQDAACSQRNMQLRTYRVVPMTSRLGLIEWIENTMTLKDLLLSNMSQEEKVANNSDPKAPIRDYKDWLMKVSGKSDAGAYVLMYSRANRTETVVAFRRRESQVPPDLLKRAFVKMSTSPEAFLALRSHFASSHALLCISHWLLGIGDRHLNNFMVAMETGSVIGIDFGHAFGSATQFLPVPELMPFRLTRQFVSLMLPMKETGLMCTVMVHALRAFRSCAGLLTDTMEIFVKEPSFDWKSFEQTMLRKGGSWIQEINVTEKNWYPQHKIRYAKRKLAGANPAVITCDELYLGHEASSAFRSYTAVARGNRDYNIRAQEPESGLSEETQVKCLVDQATDPNILGRTWEGWEPWM.

Lysine 117 carries the post-translational modification N6-acetyllysine. Residues aspartate 288–isoleucine 323 form an HEAT 1 repeat. 4 positions are modified to phosphoserine: serine 511, serine 686, serine 840, and serine 891. 2 HEAT repeats span residues glutamine 1001–serine 1037 and proline 1050–phenylalanine 1086. Position 1062 is a phosphoserine (serine 1062). Lysine 1206 carries the post-translational modification N6-acetyllysine. The tract at residues leucine 1501 to leucine 1536 is interaction with C1D. Residues leucine 1501–leucine 1536 are leucine-zipper. The stretch at proline 1720–proline 1753 is one TPR 1 repeat. Lysine 1967 carries the post-translational modification N6-acetyllysine. Positions tyrosine 2049 to serine 2071 are disordered. Serine 2053 carries the phosphoserine; by autocatalysis modification. The segment covering glutamine 2054–aspartate 2070 has biased composition (basic and acidic residues). Residue lysine 2255 is modified to N6-acetyllysine. A KIP-binding region spans residues leucine 2432–glutamate 3213. Threonine 2531 carries the phosphothreonine modification. Threonine 2605 is subject to Phosphothreonine; by autocatalysis. At serine 2608 the chain carries Phosphoserine; by autocatalysis. Positions threonine 2614–glutamine 2635 are disordered. Threonine 2634 and threonine 2643 each carry phosphothreonine; by autocatalysis. The segment at glutamate 2738–glutamine 2766 is may split the end of the DNA molecule, with the two strands separating around the region. The FAT domain maps to proline 2907–serine 3539. TPR repeat units follow at residues valine 2921 to threonine 2954 and asparagine 2956 to valine 2983. The residue at position 3206 (serine 3206) is a Phosphoserine. Residues lysine 3241, lysine 3260, lysine 3638, and lysine 3642 each carry the N6-acetyllysine modification. Residues phenylalanine 3722–glycine 4053 enclose the PI3K/PI4K catalytic domain. Positions valine 3728–lysine 3734 are G-loop. 2 positions are modified to phosphoserine: serine 3731 and serine 3821. The segment at glycine 3919–asparagine 3927 is catalytic loop. Residues glycine 3939 to threonine 3964 are activation loop. The residue at position 4026 (serine 4026) is a Phosphoserine. Positions serine 4096–methionine 4128 constitute an FATC domain.

This sequence belongs to the PI3/PI4-kinase family. DNA-PK is a heterotrimer of PRKDC and the Ku dimer (composed of XRCC6/Ku70 and XRCC5/Ku86). Formation of this complex may be promoted by interaction with ILF3. Component of the core long-range non-homologous end joining (NHEJ) complex (also named DNA-PK complex) composed of PRKDC, LIG4, XRCC4, XRCC6/Ku70, XRCC5/Ku86 and NHEJ1/XLF. Additional component of the NHEJ complex includes PAXX. Following autophosphorylation, PRKDC dissociates from DNA. Interacts with DNA-PKcs-interacting protein (KIP) with the region upstream the kinase domain. PRKDC alone also interacts with and phosphorylates DCLRE1C, thereby activating the latent endonuclease activity of this protein. Interacts with C1D. Interacts with TTI1 and TELO2. Interacts with CIB1. Interacts with SETX. Interacts with NR4A3; the DNA-dependent protein kinase complex DNA-PK phosphorylates and activates NR4A3 and prevents NR4A3 ubiquitination and degradation. Interacts with BRAT1. Part of the HDP-RNP complex composed of at least HEXIM1, PRKDC, XRCC5, XRCC6, paraspeckle proteins (SFPQ, NONO, PSPC1, RBM14, and MATR3) and NEAT1 RNA. Interacts with KAT5. Post-translationally, autophosphorylated at two clusters, the T2609 cluster and the S2056 cluster. Autophosphorylated on Ser-2053, Thr-2605, Thr-2634 and Thr-2643. Ser-2053 and Thr-2605 are DNA damage-inducible phosphorylation sites (inducible with ionizing radiation, IR) dephosphorylated by PPP5C. Autophosphorylation induces a conformational change that leads to remodeling of the DNA-PK complex, requisite for efficient end processing and DNA repair. Autophosphorylation in trans within DNA-PK complexes loaded on DNA ends leads to the dissociation of PRKDC from DNA and the transition into the short-range NHEJ complex. Autophosphorylation of the T2609 cluster is required for hematopoietic development and protein synthesis in erythrocytes precursors. S-nitrosylated by GAPDH. In terms of processing, polyubiquitinated by RNF144A, leading to proteasomal degradation.

It is found in the nucleus. Its subcellular location is the nucleolus. The protein localises to the cytoplasm. It localises to the cytosol. The enzyme catalyses L-seryl-[protein] + ATP = O-phospho-L-seryl-[protein] + ADP + H(+). It carries out the reaction L-threonyl-[protein] + ATP = O-phospho-L-threonyl-[protein] + ADP + H(+). Its activity is regulated as follows. Activity seems to be attenuated by autophosphorylation. Binding to the SL1 region of U3 small nucleolar RNA promotes auto-phosphorylation activity. Inhibited by wortmannin. Serine/threonine-protein kinase that acts as a molecular sensor for DNA damage. Involved in DNA non-homologous end joining (NHEJ) required for double-strand break (DSB) repair and V(D)J recombination. Must be bound to DNA to express its catalytic properties. Promotes processing of hairpin DNA structures in V(D)J recombination by activation of the hairpin endonuclease artemis (DCLRE1C). Recruited by XRCC5 and XRCC6 to DNA ends and is required to (1) protect and align broken ends of DNA, thereby preventing their degradation, (2) and sequester the DSB for repair by NHEJ. Acts as a scaffold protein to aid the localization of DNA repair proteins to the site of damage. The assembly of the DNA-PK complex at DNA ends is also required for the NHEJ ligation step. Found at the ends of chromosomes, suggesting a further role in the maintenance of telomeric stability and the prevention of chromosomal end fusion. Also involved in modulation of transcription. As part of the DNA-PK complex, involved in the early steps of ribosome assembly by promoting the processing of precursor rRNA into mature 18S rRNA in the small-subunit processome. Binding to U3 small nucleolar RNA, recruits PRKDC and XRCC5/Ku86 to the small-subunit processome. Recognizes the substrate consensus sequence [ST]-Q. Phosphorylates 'Ser-139' of histone variant H2AX, thereby regulating DNA damage response mechanism. Phosphorylates ASF1A, DCLRE1C, c-Abl/ABL1, histone H1, HSPCA, c-jun/JUN, p53/TP53, PARP1, POU2F1, DHX9, FH, SRF, NHEJ1/XLF, XRCC1, XRCC4, XRCC5, XRCC6, WRN, MYC and RFA2. Can phosphorylate C1D not only in the presence of linear DNA but also in the presence of supercoiled DNA. Ability to phosphorylate p53/TP53 in the presence of supercoiled DNA is dependent on C1D. Acts as a regulator of the phosphatidylinositol 3-kinase/protein kinase B signal transduction by mediating phosphorylation of 'Ser-473' of protein kinase B (PKB/AKT1, PKB/AKT2, PKB/AKT3), promoting their activation. Contributes to the determination of the circadian period length by antagonizing phosphorylation of CRY1 'Ser-588' and increasing CRY1 protein stability, most likely through an indirect mechanism. Plays a role in the regulation of DNA virus-mediated innate immune response by assembling into the HDP-RNP complex, a complex that serves as a platform for IRF3 phosphorylation and subsequent innate immune response activation through the cGAS-STING pathway. Also regulates the cGAS-STING pathway by catalyzing phosphorylation of CGAS, thereby impairing CGAS oligomerization and activation. Also regulates the cGAS-STING pathway by mediating phosphorylation of PARP1. This is DNA-dependent protein kinase catalytic subunit (Prkdc) from Mus musculus (Mouse).